Consider the following 166-residue polypeptide: MDEKQLYKHIITKSTNTCVKFTPRDITKITDYVYLGNYRNVIELPNKTFFKYIVNVSMLKYKLKRTDITVLHFPLEDNDTVSISKHIDAVTYVLKKCESLKIPVLVHCMAGINRSSAMIMGYLMEIRDKNIPFVIYFLYIYHELKYIRGAFIENKSFLNQIIDKYI.

A Tyrosine-protein phosphatase domain is found at 25–166; that stretch reads DITKITDYVY…FLNQIIDKYI (142 aa). Cys108 acts as the Phosphocysteine intermediate in catalysis.

This sequence belongs to the protein-tyrosine phosphatase family. Non-receptor class dual specificity subfamily. Homodimer.

Its subcellular location is the virion. It localises to the host cytoplasm. It catalyses the reaction O-phospho-L-tyrosyl-[protein] + H2O = L-tyrosyl-[protein] + phosphate. The enzyme catalyses O-phospho-L-seryl-[protein] + H2O = L-seryl-[protein] + phosphate. In terms of biological role, serine/Tyrosine phosphatase which down-regulates cellular antiviral response by dephosphorylating activated STAT1 and blocking interferon (IFN)-stimulated innate immune responses. The chain is Probable dual specificity protein phosphatase H1 homolog from Vertebrata (FPV).